We begin with the raw amino-acid sequence, 787 residues long: Disintegrin and metalloproteinase domain-containing protein 32 (787 aa).

The signal sequence occupies residues 1 to 16 (MFRLWLLLAGLCGLLA). Ser17 bears the Phosphoserine mark. The propeptide occupies 17 to 174 (SRPGFQNSLL…PMDDNIFISE (158 aa)). Residues Asn39 and Asn125 are each glycosylated (N-linked (GlcNAc...) asparagine). Residues 175–682 (KSEPAVPDLF…ERASGKTENT (508 aa)) are Extracellular-facing. Positions 186-383 (LYLEMHIVVD…VGVKCLQNKP (198 aa)) constitute a Peptidase M12B domain. Disulfide bonds link Cys295-Cys378, Cys337-Cys362, Cys339-Cys344, and Cys450-Cys471. One can recognise a Disintegrin domain in the interval 391–479 (KPVCGNGRLE…ECGPDITLIN (89 aa)). N-linked (GlcNAc...) asparagine glycans are attached at residues Asn465 and Asn598. The EGF-like domain maps to 622–654 (SAHVCSQQCSGHGVCDSRNKCHCSPGYKPPNCQ). Disulfide bonds link Cys626–Cys636, Cys630–Cys642, and Cys644–Cys653. A helical membrane pass occupies residues 683 to 703 (WLLGFLIALPILIVTTAIVLA). Over 704–787 (RKQLKKWFAK…DSTQTQSSSN (84 aa)) the chain is Cytoplasmic. Residues 715–787 (EEFPSSESKS…DSTQTQSSSN (73 aa)) form a disordered region. The span at 728–749 (TQTYASQSSSEGSTQTYASQTR) shows a compositional bias: polar residues. A compositionally biased stretch (low complexity) spans 771–787 (TSRSKSQDSTQTQSSSN).

As to expression, testis specific.

It is found in the membrane. May play a role in sperm development and fertilization This is a non-catalytic metalloprotease-like protein. In Homo sapiens (Human), this protein is Disintegrin and metalloproteinase domain-containing protein 32 (ADAM32).